A 29-amino-acid polypeptide reads, in one-letter code: Cyclotide mang-A (29 aa).

The cyclopeptide (Gly-Asp) cross-link spans 1–29; that stretch reads GFPTCGETCTLGTCNTPGCTCSWPICTRD. Disulfide bonds link C5-C19, C9-C21, and C14-C26.

The protein belongs to the cyclotide family. Moebius subfamily. Post-translationally, this is a cyclic peptide.

Functionally, probably participates in a plant defense mechanism. The chain is Cyclotide mang-A from Melicytus angustifolius (Hymenanthera angustifolia).